The primary structure comprises 1446 residues: Toll-like receptor 7 (1446 aa).

An N-terminal signal peptide occupies residues 1 to 16 (MAAILLLLLGFSWSLA). Residues 17 to 1049 (VESALAPKES…QHGIPESYIP (1033 aa)) lie on the Extracellular side of the membrane. LRR repeat units lie at residues 133–156 (LQTL…AFEG), 158–180 (ATLK…TLEL), 188–211 (LKQL…FLCP), 213–235 (GNLQ…GFAD), 246–270 (GSEL…GISR), 271–294 (LRRL…ALAG), 295–318 (LASL…LFAG), 320–342 (KELR…LFHR), 344–368 (EQLL…TFAG), 369–392 (LIRL…TFKE), 393–416 (LYFL…AFLP), 417–440 (LYNL…LFNG), 442–464 (YVLS…VFKN), 465–488 (CSDL…LQDL), 489–511 (AMLR…SFKN), 513–535 (HQLT…MFQD), 536–559 (LPRL…SFDK), 561–582 (FELE…VFAT), 584–605 (VSLL…AFIP), 606–629 (SNLK…KLQE), 631–652 (IRVK…MSIP), 653–675 (NTIE…AFVD), and 677–699 (ANLA…QLRV). In terms of domain architecture, LRRCT spans 716–773 (NPFECDCTMDWLQRINNLTTRQHPRVMDMANIECVMPHARGAAVRPLSGLRPQDFLCR). 3 disulfide bridges follow: C722–C772, C796–C802, and C800–C815. LRR repeat units follow at residues 828-851 (PMDS…AFIG), 852-875 (RKNL…TFAS), 876-899 (LASL…EFEQ), 900-923 (LSAL…TLAP), 925-947 (AALE…QMHA), and 951-979 (GTRL…SYVA). A disulfide bridge connects residues C966 and C993. A helical transmembrane segment spans residues 1050–1070 (LLAAALALLFLLVVIAMVFAF). Residues 1071–1446 (RESLRIWLFA…QGPHVQAYLV (376 aa)) lie on the Cytoplasmic side of the membrane. One can recognise a TIR domain in the interval 1096–1233 (KLYDAVLLHS…HFWEKLRYAL (138 aa)). Disordered regions lie at residues 1301 to 1332 (QNYS…NHHL) and 1388 to 1446 (RPKR…AYLV). Polar residues predominate over residues 1395-1413 (HLQQAQAGTLGSKASQAAH). Over residues 1414-1426 (QQQQQQQQQQQQQ) the composition is skewed to low complexity. The span at 1427–1439 (PNPTAVSGQQQGP) shows a compositional bias: polar residues.

It belongs to the Toll-like receptor family. As to expression, expressed in the fan-shaped body and the ellipsoid body, which are components of the locomotion center in the CNS (at protein level).

The protein localises to the cell membrane. Functionally, toll-related receptor which binds to the neurotrophins NT1 and spz5. Essential for antiviral autophagy, it detects and binds to the vesicular stomatitis virus (vsv) following infection. This role is likely to be independent of the canonical Toll, immune deficiency, and JAK-STAT signaling pathways. Functions in olfactory circuit assembly by promoting synaptic partner matching between olfactory receptor neurons (ORN) axons and projection neurons (PN) dendrites partners in the antennal lobe. Function in the Va1d ORNs is necessary and sufficient for correct targeting to their partner PN dendrites. Also involved in the targeting of other classes of ORN axons. Functions with Toll-6 to regulate motor axon targeting and neuronal survival in the central nervous system (CNS). May be an upstream component of the NF-kappa-B (rel) regulatory cascade. The polypeptide is Toll-like receptor 7 (Drosophila melanogaster (Fruit fly)).